The chain runs to 676 residues: tRNA uridine 5-carboxymethylaminomethyl modification enzyme MnmG (676 aa).

FAD is bound at residue 15-20 (GAGHAG). 316–330 (GPRYCPSIEDKIVRF) contacts NAD(+).

This sequence belongs to the MnmG family. As to quaternary structure, homodimer. Heterotetramer of two MnmE and two MnmG subunits. FAD is required as a cofactor.

It localises to the cytoplasm. Its function is as follows. NAD-binding protein involved in the addition of a carboxymethylaminomethyl (cmnm) group at the wobble position (U34) of certain tRNAs, forming tRNA-cmnm(5)s(2)U34. In Roseiflexus castenholzii (strain DSM 13941 / HLO8), this protein is tRNA uridine 5-carboxymethylaminomethyl modification enzyme MnmG.